Consider the following 436-residue polypeptide: Trigger factor (436 aa).

Positions 164 to 249 (GDTVVIDFEG…IHEVKTKELP (86 aa)) constitute a PPIase FKBP-type domain.

This sequence belongs to the FKBP-type PPIase family. Tig subfamily.

It localises to the cytoplasm. It catalyses the reaction [protein]-peptidylproline (omega=180) = [protein]-peptidylproline (omega=0). In terms of biological role, involved in protein export. Acts as a chaperone by maintaining the newly synthesized protein in an open conformation. Functions as a peptidyl-prolyl cis-trans isomerase. The chain is Trigger factor from Ligilactobacillus salivarius (strain UCC118) (Lactobacillus salivarius).